The following is a 214-amino-acid chain: tRNA (guanine-N(7)-)-methyltransferase (214 aa).

Positions 43, 68, 95, and 117 each coordinate S-adenosyl-L-methionine. The active site involves aspartate 117. Residues lysine 121, aspartate 153, and 191-194 (TEYE) each bind substrate.

The protein belongs to the class I-like SAM-binding methyltransferase superfamily. TrmB family.

It carries out the reaction guanosine(46) in tRNA + S-adenosyl-L-methionine = N(7)-methylguanosine(46) in tRNA + S-adenosyl-L-homocysteine. It participates in tRNA modification; N(7)-methylguanine-tRNA biosynthesis. Functionally, catalyzes the formation of N(7)-methylguanine at position 46 (m7G46) in tRNA. The sequence is that of tRNA (guanine-N(7)-)-methyltransferase from Lachnoclostridium phytofermentans (strain ATCC 700394 / DSM 18823 / ISDg) (Clostridium phytofermentans).